The primary structure comprises 401 residues: ATP phosphoribosyltransferase regulatory subunit (401 aa).

The disordered stretch occupies residues 373–401 (PGQQGGAAAQGCDRRLQQDDGGGWVTRPL). Residues 392–401 (DGGGWVTRPL) are compositionally biased toward gly residues.

Belongs to the class-II aminoacyl-tRNA synthetase family. HisZ subfamily. Heteromultimer composed of HisG and HisZ subunits.

The protein localises to the cytoplasm. It functions in the pathway amino-acid biosynthesis; L-histidine biosynthesis; L-histidine from 5-phospho-alpha-D-ribose 1-diphosphate: step 1/9. Functionally, required for the first step of histidine biosynthesis. May allow the feedback regulation of ATP phosphoribosyltransferase activity by histidine. The protein is ATP phosphoribosyltransferase regulatory subunit of Alkalilimnicola ehrlichii (strain ATCC BAA-1101 / DSM 17681 / MLHE-1).